We begin with the raw amino-acid sequence, 65 residues long: Large ribosomal subunit protein bL33 (65 aa).

The disordered stretch occupies residues S17–R40.

It belongs to the bacterial ribosomal protein bL33 family.

The protein is Large ribosomal subunit protein bL33 of Prochlorococcus marinus (strain NATL1A).